We begin with the raw amino-acid sequence, 210 residues long: Ion-translocating oxidoreductase complex subunit G (210 aa).

A helical transmembrane segment spans residues 9-29; that stretch reads SLVLALFAIAATALVTITYAL. The residue at position 176 (Thr-176) is an FMN phosphoryl threonine.

This sequence belongs to the RnfG family. In terms of assembly, the complex is composed of six subunits: RnfA, RnfB, RnfC, RnfD, RnfE and RnfG. Requires FMN as cofactor.

It localises to the cell inner membrane. Its function is as follows. Part of a membrane-bound complex that couples electron transfer with translocation of ions across the membrane. The chain is Ion-translocating oxidoreductase complex subunit G from Aliivibrio fischeri (strain MJ11) (Vibrio fischeri).